Here is a 334-residue protein sequence, read N- to C-terminus: Ornithine carbamoyltransferase (334 aa).

Carbamoyl phosphate contacts are provided by residues 57–60, Q84, R108, and 135–138; these read STRT and HPTQ. L-ornithine contacts are provided by residues N169, D233, and 237–238; that span reads SM. Residues 275–276 and R320 each bind carbamoyl phosphate; that span reads CL.

The protein belongs to the aspartate/ornithine carbamoyltransferase superfamily. OTCase family.

It localises to the cytoplasm. The enzyme catalyses carbamoyl phosphate + L-ornithine = L-citrulline + phosphate + H(+). It functions in the pathway amino-acid biosynthesis; L-arginine biosynthesis; L-arginine from L-ornithine and carbamoyl phosphate: step 1/3. Reversibly catalyzes the transfer of the carbamoyl group from carbamoyl phosphate (CP) to the N(epsilon) atom of ornithine (ORN) to produce L-citrulline. The protein is Ornithine carbamoyltransferase of Aliivibrio fischeri (strain ATCC 700601 / ES114) (Vibrio fischeri).